We begin with the raw amino-acid sequence, 250 residues long: Expansin-like B1 (250 aa).

The signal sequence occupies residues 1–24 (MKHSHVLLLLFVQVIVLLPLLCLS). The 105-residue stretch at 45 to 149 (RGHCGYGEFG…QRIPCRYAGY (105 aa)) folds into the Expansin-like EG45 domain. An N-linked (GlcNAc...) asparagine glycan is attached at N72. One can recognise an Expansin-like CBD domain in the interval 163–245 (HYLAILVLYV…DWTAGATYDS (83 aa)).

This sequence belongs to the expansin family. Expansin-like B subfamily.

Its subcellular location is the secreted. The chain is Expansin-like B1 (EXLB1) from Arabidopsis thaliana (Mouse-ear cress).